A 165-amino-acid polypeptide reads, in one-letter code: MPPKFDPNEIKVVYLRCTGGEVGATSALAPKIGPLGLSPKKVGDDIAKATGDWKGLRITVKLTIQNRQAQIEVVPSASALIIKALKEPPRDRKKQKNIKHSGNITFDEIVNIARQMRHRSLARELSGTIKEILGTAQSVGCNVDGRHPHDIIDDINSGAVECPAS.

At S38 the chain carries Phosphoserine. K40 participates in a covalent cross-link: Glycyl lysine isopeptide (Lys-Gly) (interchain with G-Cter in SUMO2). K48 is covalently cross-linked (Glycyl lysine isopeptide (Lys-Gly) (interchain with G-Cter in ubiquitin)). At K54 the chain carries N6-acetyllysine. K83 participates in a covalent cross-link: Glycyl lysine isopeptide (Lys-Gly) (interchain with G-Cter in ubiquitin). S165 is subject to Phosphoserine.

It belongs to the universal ribosomal protein uL11 family. As to quaternary structure, component of the large ribosomal subunit. Mature ribosomes consist of a small (40S) and a large (60S) subunit. The 40S subunit contains about 33 different proteins and 1 molecule of RNA (18S). The 60S subunit contains about 49 different proteins and 3 molecules of RNA (28S, 5.8S and 5S). Ubiquitinated at Lys-48 and Lys-83 by RNF14 and RNF25 in response to ribosome collisions (ribosome stalling).

Its subcellular location is the cytoplasm. Functionally, component of the large ribosomal subunit. The ribosome is a large ribonucleoprotein complex responsible for the synthesis of proteins in the cell. Binds directly to 26S ribosomal RNA. In Bos taurus (Bovine), this protein is Large ribosomal subunit protein uL11 (RPL12).